Here is a 354-residue protein sequence, read N- to C-terminus: Yop proteins translocation protein U (354 aa).

A disordered region spans residues 1–20; sequence MSGEKTEQPTPKKIRDARKK. Transmembrane regions (helical) follow at residues 30–50, 79–99, 138–158, 163–183, and 187–207; these read VSTALIVALSAMLMGLSDYYF, VLLEFFYLCFPLLTVAALMAI, VEFLKSILKVVLLSILIWIII, VTLLQLPTCGIECITPLLGQI, and LMVICTVGFVVISIADYAFEY.

It belongs to the type III secretion exporter family.

The protein localises to the cell membrane. Functionally, component of the yop secretion machinery. The protein is Yop proteins translocation protein U (yscU) of Yersinia pestis.